Here is a 1182-residue protein sequence, read N- to C-terminus: MEAMSPQQDALGAQPGRSSSLTGMSRIAGGPGTKKKMKTLAERRRSAPSLILDKALQKRPSTRDSHSASIDTCAFLSSFMCSSRTLLIDGPVELKRGLQRQERHLFLFNDLFVSAKIKYNNNFKIKNKVKLADMWTASCVDEVGEGNTNALKSFVLGWPTVNFVATFSSPEQKDKWLSLLQRYIALEKEKDYPKSIPLKIFAKDIGNCAYFKTISVMNSDTASEVINMSLQMLGITGSERDYQLWVNSGKEAAPYPLIGHEYPYGIKMSHLRDTALLTQGSKDSASPSQLQEPFLMEQLPREMQCQFILKPTRLATAQQLSDSSHKTYKRRRSIINWAFWRGSSTHLDNLPVSPTSPMPGQLFGVSLPDICENDNLPKPILDMLSFLNQKGPLTKGIFRQSANMKSCRELKEKLNSGIEVHLDCESIFVIASVLKDFLRNIPESIFSSDLYDHWVCVMDQGNDEEKINTIQRLLDQLPRANVVFLRYLFGVLHNIEQHSLSNQMTAFNLAVCIAPSILWPPASSSPELENEFTKKVSLLIQFLIENCCRIFGEEITSLLGELSERSDREHTPDTSCFQLNDSSYDSLENELNEDADAPCSDLVKRLGQGSRSMDSVLTLSDYDLEPPEAEGLLTLSNFDLDQSKEEHIRTKQPLETKPVSVFVAYRKVSLGEHTRAPDGPGTPSCLPATASDARKVFRRHRRSSEPSIDYLDAKLSYLREFYQKKLRKSSCDAVLSRKDEDYLKQTQPQKKGDQRCFKQSSVTGTDVSKRNTANENIKKKSLSGHEGIQETPFTKSKPVAISVASYMSSQDHSWEQPFEADACRFSPPHIADAQKSSRAHRRCSEPSIDDQNYKLSYLRGVYSKKQSKTSCEAGLLHGEEDYLKRHKSLQMEGQKLINQSLVMGIEVGKSSSSTNQSTEKVLPPRLNLCPRASYSSLSSPGTSPSGSSVSSQDSAFSQISEHSVFTPTETSSPIDCTFRAQRKQEELSSDCDSPSLVSGMPGPSTGQASSHLAYLRKGTTEQLPQMHSVTLHPSTWLRSGLVTLKNWSLKKKTKAARPEDRKDCSLKEPLELPACAAGTPEADSLQESQEDIHLGVDEGAGQTACGLSSYACQDSEQHASSPFCLAGSRLTLGMKLHEGEESGGQYPCDNPWEGAPSGLETSEDAANTGVEPATVCNDGDRH.

The disordered stretch occupies residues 1–40 (MEAMSPQQDALGAQPGRSSSLTGMSRIAGGPGTKKKMKTL). The residue at position 46 (Ser-46) is a Phosphoserine. The region spanning 86-187 (LLIDGPVELK…SLLQRYIALE (102 aa)) is the PH domain. One can recognise a Ras-associating domain in the interval 194-283 (KSIPLKIFAK…TALLTQGSKD (90 aa)). Positions 365 to 551 (VSLPDICEND…FLIENCCRIF (187 aa)) constitute a Rho-GAP domain. Ser-704 and Ser-730 each carry phosphoserine. Disordered stretches follow at residues 744–791 (KQTQ…IQET), 932–953 (ASYSSLSSPGTSPSGSSVSSQD), 981–1009 (QRKQEELSSDCDSPSLVSGMPGPSTGQAS), and 1140–1182 (EESG…GDRH). Positions 757–775 (FKQSSVTGTDVSKRNTANE) are enriched in polar residues. Over residues 933–953 (SYSSLSSPGTSPSGSSVSSQD) the composition is skewed to low complexity.

As to expression, highest expression is found in testis. Ubiquitously expressed in extragonadal tissues.

GTPase activator for the Rho-type GTPases by converting them to an inactive GDP-bound state. The polypeptide is Rho GTPase-activating protein 20 (Arhgap20) (Rattus norvegicus (Rat)).